Consider the following 491-residue polypeptide: Probable protein phosphatase 2C 52 (491 aa).

Residues Met-1–Glu-11 show a composition bias toward basic and acidic residues. The disordered stretch occupies residues Met-1–Val-211. Over residues Ser-12 to Gly-54 the composition is skewed to low complexity. Over residues Gly-66–Ala-78 the composition is skewed to basic residues. Residues Val-95–Gln-105 show a composition bias toward acidic residues. Positions Val-187–Val-211 are enriched in basic and acidic residues. Residues Ser-229 to Phe-475 enclose the PPM-type phosphatase domain. Positions 265, 266, 427, and 466 each coordinate Mn(2+).

Belongs to the PP2C family. Mg(2+) is required as a cofactor. Mn(2+) serves as cofactor.

The enzyme catalyses O-phospho-L-seryl-[protein] + H2O = L-seryl-[protein] + phosphate. It carries out the reaction O-phospho-L-threonyl-[protein] + H2O = L-threonyl-[protein] + phosphate. The polypeptide is Probable protein phosphatase 2C 52 (Oryza sativa subsp. japonica (Rice)).